A 164-amino-acid polypeptide reads, in one-letter code: uncharacterized protein (164 aa).

Positions 1-25 are cleaved as a signal peptide; it reads MMKTVKHLLCCAIAASALISTGVHA.

This is an uncharacterized protein from Escherichia coli (strain K12).